The sequence spans 86 residues: MKTLLLTLVVVTIVCLDLGYSLTCLNCPEQYCKRIHTCRNGENVCFKRFYEGKLLCKQFRRGCAATCPEAKSREIVQCCSTDECNH.

The signal sequence occupies residues 1–21; it reads MKTLLLTLVVVTIVCLDLGYS. Cystine bridges form between cysteine 24/cysteine 45, cysteine 27/cysteine 32, cysteine 38/cysteine 63, cysteine 67/cysteine 78, and cysteine 79/cysteine 84.

Belongs to the three-finger toxin family. Ancestral subfamily. Orphan group II sub-subfamily. In terms of tissue distribution, expressed by the venom gland.

It localises to the secreted. In terms of biological role, binds with low affinity to muscular (alpha-1-beta-1-delta-epsilon/CHRNA1-CHRNB1-CHRND-CHRNE) and very low affinity to neuronal (alpha-7/CHRNA7) nicotinic acetylcholine receptor (nAChR). The protein is Weak neurotoxin WNTX34 of Ophiophagus hannah (King cobra).